The primary structure comprises 70 residues: ATP synthase subunit c (70 aa).

2 helical membrane-spanning segments follow: residues 5-25 (AAGI…AIIV) and 47-67 (FIGV…SFIL).

Belongs to the ATPase C chain family. F-type ATPases have 2 components, F(1) - the catalytic core - and F(0) - the membrane proton channel. F(1) has five subunits: alpha(3), beta(3), gamma(1), delta(1), epsilon(1). F(0) has three main subunits: a(1), b(2) and c(10-14). The alpha and beta chains form an alternating ring which encloses part of the gamma chain. F(1) is attached to F(0) by a central stalk formed by the gamma and epsilon chains, while a peripheral stalk is formed by the delta and b chains.

It is found in the cell membrane. Functionally, f(1)F(0) ATP synthase produces ATP from ADP in the presence of a proton or sodium gradient. F-type ATPases consist of two structural domains, F(1) containing the extramembraneous catalytic core and F(0) containing the membrane proton channel, linked together by a central stalk and a peripheral stalk. During catalysis, ATP synthesis in the catalytic domain of F(1) is coupled via a rotary mechanism of the central stalk subunits to proton translocation. Key component of the F(0) channel; it plays a direct role in translocation across the membrane. A homomeric c-ring of between 10-14 subunits forms the central stalk rotor element with the F(1) delta and epsilon subunits. This Halalkalibacterium halodurans (strain ATCC BAA-125 / DSM 18197 / FERM 7344 / JCM 9153 / C-125) (Bacillus halodurans) protein is ATP synthase subunit c.